The following is a 100-amino-acid chain: Small ribosomal subunit protein uS14c (100 aa).

This sequence belongs to the universal ribosomal protein uS14 family. Part of the 30S ribosomal subunit.

The protein localises to the plastid. It is found in the chloroplast. Functionally, binds 16S rRNA, required for the assembly of 30S particles. The sequence is that of Small ribosomal subunit protein uS14c from Oltmannsiellopsis viridis (Marine flagellate).